A 357-amino-acid chain; its full sequence is Protein RecA (357 aa).

Residue 73-80 (GPESSGKT) participates in ATP binding.

Belongs to the RecA family.

It is found in the cytoplasm. In terms of biological role, can catalyze the hydrolysis of ATP in the presence of single-stranded DNA, the ATP-dependent uptake of single-stranded DNA by duplex DNA, and the ATP-dependent hybridization of homologous single-stranded DNAs. It interacts with LexA causing its activation and leading to its autocatalytic cleavage. The protein is Protein RecA of Methylibium petroleiphilum (strain ATCC BAA-1232 / LMG 22953 / PM1).